The primary structure comprises 202 residues: Putative zinc finger protein ZK686.5 (202 aa).

Residues R43 to K63 form a disordered region. 3 consecutive C2H2-type zinc fingers follow at residues T110–H133, I138–H160, and V169–H192.

It is found in the nucleus. This chain is Putative zinc finger protein ZK686.5, found in Caenorhabditis elegans.